The sequence spans 75 residues: Putative defensin-like protein 126 (75 aa).

The first 24 residues, 1-24 (MSKSTFLFVYIILILGSMVNEIQG), serve as a signal peptide directing secretion. 4 disulfides stabilise this stretch: C29/C73, C38/C57, C43/C67, and C47/C69.

The protein belongs to the DEFL family.

It is found in the secreted. This chain is Putative defensin-like protein 126 (LCR6), found in Arabidopsis thaliana (Mouse-ear cress).